The sequence spans 110 residues: Thiosulfate sulfurtransferase GlpE (110 aa).

One can recognise a Rhodanese domain in the interval 17-105 (RENGAQVVDI…WRSVYPADTS (89 aa)). C65 functions as the Cysteine persulfide intermediate in the catalytic mechanism.

It belongs to the GlpE family.

The protein resides in the cytoplasm. It catalyses the reaction thiosulfate + hydrogen cyanide = thiocyanate + sulfite + 2 H(+). It carries out the reaction thiosulfate + [thioredoxin]-dithiol = [thioredoxin]-disulfide + hydrogen sulfide + sulfite + 2 H(+). In terms of biological role, transferase that catalyzes the transfer of sulfur from thiosulfate to thiophilic acceptors such as cyanide or dithiols. May function in a CysM-independent thiosulfate assimilation pathway by catalyzing the conversion of thiosulfate to sulfite, which can then be used for L-cysteine biosynthesis. The chain is Thiosulfate sulfurtransferase GlpE from Pseudomonas paraeruginosa (strain DSM 24068 / PA7) (Pseudomonas aeruginosa (strain PA7)).